A 396-amino-acid polypeptide reads, in one-letter code: OTU domain-containing protein 3 (396 aa).

Residues 1–49 (MSRKQAAKSRPGSGGRRAEAERKRDERAARRALAKERRNRPDPGGSGCE) are disordered. Residues 16-41 (RRAEAERKRDERAARRALAKERRNRP) show a composition bias toward basic and acidic residues. The region spanning 64–188 (LKLREVPGDG…GEHYDSVRRI (125 aa)) is the OTU domain. Lys65 bears the N6-acetyllysine mark. Positions 69 to 75 (VPGDGNC) are cys-loop. Asp72 is a catalytic residue. The Nucleophile role is filled by Cys75. N6-acetyllysine occurs at positions 121 and 128. Residues 126 to 136 (LSKPGTFAGND) form a variable-loop region. The tract at residues 176-181 (YRYGEH) is his-loop. His181 is a catalytic residue. Lys219 carries the post-translational modification N6-acetyllysine. One can recognise a UBA-like domain in the interval 229 to 269 (DDVEDAVHKVGSATGCTDFNLIVQNLEAENYNIKSAITALL). The tract at residues 275-381 (TGNDAEENHE…RDTGRSEADM (107 aa)) is disordered. Basic and acidic residues-rich tracts occupy residues 280 to 301 (EENH…EAGS), 312 to 331 (NEGR…ESKA), and 343 to 379 (QRRE…RSEA). Lys290 carries the N6-acetyllysine modification.

In terms of processing, glucose and fatty acids stimulate CREBBP-dependent acetylation, promoting its nuclear translocation.

The protein resides in the cytoplasm. The protein localises to the nucleus. It carries out the reaction Thiol-dependent hydrolysis of ester, thioester, amide, peptide and isopeptide bonds formed by the C-terminal Gly of ubiquitin (a 76-residue protein attached to proteins as an intracellular targeting signal).. In terms of biological role, deubiquitinating enzyme that hydrolyzes 'Lys-6'- and 'Lys-11'-linked polyubiquitin. Also hydrolyzes heterotypic (mixed and branched) and homotypic chains. Important regulator of energy metabolism. Glucose and fatty acids trigger its nuclear translocation by CBP-dependent acetylation. In the nucleus, deubiquitinates and stabilizes the nuclear receptor PPARD regulating the expression of various genes involved in glucose and lipid metabolism and oxidative phosphorylation. Also acts as a negative regulator of the ribosome quality control (RQC) by mediating deubiquitination of 40S ribosomal proteins RPS10/eS10 and RPS20/uS10, thereby antagonizing ZNF598-mediated 40S ubiquitination. The polypeptide is OTU domain-containing protein 3 (Otud3) (Mus musculus (Mouse)).